The sequence spans 126 residues: MPEPAKSAPAPKKGSKKAVTKTQKKGDKKRKKSRKESYSIYVYKVLKQVHPDTGISSKAMGIMNSFVNDIFERIAGEASRLAHYNKRSTITSREIQTAVRSLLPGELAKHAVSEGTKAVTKYTSSK.

Positions 1–12 (MPEPAKSAPAPK) are enriched in low complexity. A disordered region spans residues 1–36 (MPEPAKSAPAPKKGSKKAVTKTQKKGDKKRKKSRKE). 2 positions are modified to N6-acetyllysine: lysine 6 and lysine 13. Residues 13 to 34 (KGSKKAVTKTQKKGDKKRKKSR) are compositionally biased toward basic residues. A Phosphoserine modification is found at serine 15. N6-acetyllysine is present on residues lysine 16 and lysine 21. A Glycyl lysine isopeptide (Lys-Gly) (interchain with G-Cter in ubiquitin) cross-link involves residue lysine 121.

It belongs to the histone H2B family. The nucleosome is a histone octamer containing two molecules each of H2A, H2B, H3 and H4 assembled in one H3-H4 heterotetramer and two H2A-H2B heterodimers. The octamer wraps approximately 147 bp of DNA. Post-translationally, monoubiquitination of Lys-121 by the RNF20/40 complex gives a specific tag for epigenetic transcriptional activation and is also prerequisite for histone H3 'Lys-4' and 'Lys-79' methylation. Phosphorylated on Ser-15 during apoptosis; which facilitates apoptotic chromatin condensation.

The protein localises to the nucleus. It localises to the chromosome. Its function is as follows. Core component of nucleosome. Nucleosomes wrap and compact DNA into chromatin, limiting DNA accessibility to the cellular machineries which require DNA as a template. Histones thereby play a central role in transcription regulation, DNA repair, DNA replication and chromosomal stability. DNA accessibility is regulated via a complex set of post-translational modifications of histones, also called histone code, and nucleosome remodeling. The chain is Histone H2B from Cairina moschata (Muscovy duck).